Here is a 543-residue protein sequence, read N- to C-terminus: Sensor histidine kinase DcuS (543 aa).

Over 1-20 the chain is Cytoplasmic; sequence MRHSLPYRMLRKRPMKLSTT. A helical transmembrane segment spans residues 21-41; sequence VILMVSAVLFSVLLVVHLIYF. The Periplasmic segment spans residues 42 to 181; it reads SQISDMTRDG…VTQQINDSRW (140 aa). Residues 107–110, Lys121, 140–142, and Arg147 each bind (R)-malate; these read RYSH and GFL. A helical transmembrane segment spans residues 182–202; sequence SIIWSVLFGMLVGLIGTCILV. The Cytoplasmic segment spans residues 203–543; sequence NVLKKILFGL…IPWDGERSNR (341 aa). In terms of domain architecture, PAS spans 212–323; it reads LEPYEISTLF…IIGAISTFRD (112 aa). Positions 346–538 constitute a Histidine kinase domain; it reads ERSHEFMNKL…QFFVQIPWDG (193 aa). His349 is subject to Phosphohistidine; by autocatalysis.

In terms of assembly, homodimer. Post-translationally, autophosphorylated. The phosphoryl group is rapidly transferred to DcuR.

It localises to the cell inner membrane. The catalysed reaction is ATP + protein L-histidine = ADP + protein N-phospho-L-histidine.. Its function is as follows. Member of the two-component regulatory system DcuR/DcuS. Involved in the C4-dicarboxylate-stimulated regulation of the genes encoding the anaerobic fumarate respiratory system (frdABCD; nuoAN; dcuB; sdhCDAB; etc.). Weakly regulates the aerobic C4-dicarboxylate transporter dctA. Activates DcuR by phosphorylation. This chain is Sensor histidine kinase DcuS (dcuS), found in Escherichia coli O6:H1 (strain CFT073 / ATCC 700928 / UPEC).